The sequence spans 121 residues: MASEETGVTAPGAQEVANAGVASEAKGKGKGPAQDTHDTEMDEDDEDDTEADEAEQVAEEVEDDGMDEIDSSNVLPSRTRGRKIDFAKAAAEQNLSVDDDEEDDDDDFNDPDAEDDKMDED.

Residues 1–121 (MASEETGVTA…DAEDDKMDED (121 aa)) form a disordered region. 2 stretches are compositionally biased toward acidic residues: residues 40 to 70 (EMDEDDEDDTEADEAEQVAEEVEDDGMDEID) and 97 to 121 (VDDDEEDDDDDFNDPDAEDDKMDED).

The protein belongs to the CHZ1 family. As to quaternary structure, forms a heterotrimer with H2A.Z-H2B, stabilizing the association of the histone dimer. Also, with a lower affinity, forms a heterotrimer with H2A-H2B.

It localises to the nucleus. Its function is as follows. Forms a chaperone-bound H2A.Z-H2B complex that acts as a source for SWR1 complex-dependent H2A to H2A.Z histone replacement in chromatin. The sequence is that of Histone H2A.Z-specific chaperone CHZ1 (CHZ1) from Pyricularia oryzae (strain 70-15 / ATCC MYA-4617 / FGSC 8958) (Rice blast fungus).